The chain runs to 64 residues: Small, acid-soluble spore protein D (64 aa).

The protein belongs to the alpha/beta-type SASP family.

Its function is as follows. SASP are bound to spore DNA. They are double-stranded DNA-binding proteins that cause DNA to change to an a-like conformation. They protect the DNA backbone from chemical and enzymatic cleavage and are thus involved in dormant spore's high resistance to UV light. The protein is Small, acid-soluble spore protein D (sspD) of Bacillus subtilis (strain 168).